Reading from the N-terminus, the 151-residue chain is 16.9 kDa class I heat shock protein 1 (151 aa).

Positions 37-151 constitute a sHSP domain; the sequence is ETAAFANARV…PEVKAIEISG (115 aa).

Belongs to the small heat shock protein (HSP20) family. In terms of assembly, may form oligomeric structures.

It is found in the cytoplasm. In Triticum aestivum (Wheat), this protein is 16.9 kDa class I heat shock protein 1 (hsp16.9A).